A 925-amino-acid polypeptide reads, in one-letter code: Bifunctional uridylyltransferase/uridylyl-removing enzyme (925 aa).

The tract at residues 1 to 382 is uridylyltransferase; that stretch reads MVLPTTKDAT…PPGAEVRRVP (382 aa). The interval 383–738 is uridylyl-removing; sequence DSDDFIIDNN…VGFDEARGVT (356 aa). An HD domain is found at 498–621; that stretch reads VDEHLIRCIG…VQSVERMKLL (124 aa). 2 ACT domains span residues 739-820 and 849-925; these read ELTI…DVMP and MIEV…NTAE.

This sequence belongs to the GlnD family. The cofactor is Mg(2+).

It carries out the reaction [protein-PII]-L-tyrosine + UTP = [protein-PII]-uridylyl-L-tyrosine + diphosphate. The enzyme catalyses [protein-PII]-uridylyl-L-tyrosine + H2O = [protein-PII]-L-tyrosine + UMP + H(+). With respect to regulation, uridylyltransferase (UTase) activity is inhibited by glutamine, while glutamine activates uridylyl-removing (UR) activity. Its function is as follows. Modifies, by uridylylation and deuridylylation, the PII regulatory proteins (GlnB and homologs), in response to the nitrogen status of the cell that GlnD senses through the glutamine level. Under low glutamine levels, catalyzes the conversion of the PII proteins and UTP to PII-UMP and PPi, while under higher glutamine levels, GlnD hydrolyzes PII-UMP to PII and UMP (deuridylylation). Thus, controls uridylylation state and activity of the PII proteins, and plays an important role in the regulation of nitrogen assimilation and metabolism. The chain is Bifunctional uridylyltransferase/uridylyl-removing enzyme from Nitrobacter winogradskyi (strain ATCC 25391 / DSM 10237 / CIP 104748 / NCIMB 11846 / Nb-255).